The sequence spans 870 residues: UvrABC system protein B (870 aa).

In terms of domain architecture, Helicase ATP-binding spans 20–410; it reads EGVDNNDRTQ…VFAEQVIRPT (391 aa). ATP is bound at residue 33–40; that stretch reads GVTGSGKT. The Beta-hairpin signature appears at 86–109; it reads YYDYYQPEAYVPRTDTFIEKESSI. One can recognise a Helicase C-terminal domain in the interval 425-591; that stretch reads QVDDVVGEIR…SVKSRISDIL (167 aa). One can recognise a UVR domain in the interval 620–655; sequence KAHLDAMEKQMRDAAANLDFEKAARIRDEIKRLREM. Disordered stretches follow at residues 671–698 and 741–870; these read ESPVSGREKGKHNKGVAKHRTAEEQERF and AKPS…RPGK. Basic residues predominate over residues 679–689; that stretch reads KGKHNKGVAKH. Composition is skewed to basic and acidic residues over residues 793–808 and 827–836; these read NSLDEMTVRRTEKPVE and TDVKDRDDSA. The span at 858–870 shows a compositional bias: basic residues; that stretch reads EKRRPGKTGRPGK.

Belongs to the UvrB family. As to quaternary structure, forms a heterotetramer with UvrA during the search for lesions. Interacts with UvrC in an incision complex.

It localises to the cytoplasm. In terms of biological role, the UvrABC repair system catalyzes the recognition and processing of DNA lesions. A damage recognition complex composed of 2 UvrA and 2 UvrB subunits scans DNA for abnormalities. Upon binding of the UvrA(2)B(2) complex to a putative damaged site, the DNA wraps around one UvrB monomer. DNA wrap is dependent on ATP binding by UvrB and probably causes local melting of the DNA helix, facilitating insertion of UvrB beta-hairpin between the DNA strands. Then UvrB probes one DNA strand for the presence of a lesion. If a lesion is found the UvrA subunits dissociate and the UvrB-DNA preincision complex is formed. This complex is subsequently bound by UvrC and the second UvrB is released. If no lesion is found, the DNA wraps around the other UvrB subunit that will check the other stand for damage. The sequence is that of UvrABC system protein B from Mesorhizobium japonicum (strain LMG 29417 / CECT 9101 / MAFF 303099) (Mesorhizobium loti (strain MAFF 303099)).